The primary structure comprises 248 residues: UPF0524 protein C3orf70 homolog (248 aa).

The interval 169–248 (KESDTPKLGH…EVIETMETTV (80 aa)) is disordered. The span at 200-227 (SCDEDTEEGAELSSEEDYSPESSWEPDE) shows a compositional bias: acidic residues.

The protein belongs to the UPF0524 family.

May play a role in neuronal and neurobehavioral development. The protein is UPF0524 protein C3orf70 homolog of Mus musculus (Mouse).